The sequence spans 191 residues: Peptidyl-tRNA hydrolase (191 aa).

Tyr-15 is a binding site for tRNA. The active-site Proton acceptor is the His-20. Phe-66, Asn-68, and Asn-114 together coordinate tRNA.

Belongs to the PTH family. Monomer.

Its subcellular location is the cytoplasm. It carries out the reaction an N-acyl-L-alpha-aminoacyl-tRNA + H2O = an N-acyl-L-amino acid + a tRNA + H(+). Hydrolyzes ribosome-free peptidyl-tRNAs (with 1 or more amino acids incorporated), which drop off the ribosome during protein synthesis, or as a result of ribosome stalling. Functionally, catalyzes the release of premature peptidyl moieties from peptidyl-tRNA molecules trapped in stalled 50S ribosomal subunits, and thus maintains levels of free tRNAs and 50S ribosomes. This is Peptidyl-tRNA hydrolase from Streptococcus agalactiae serotype Ia (strain ATCC 27591 / A909 / CDC SS700).